The chain runs to 201 residues: Natural cytotoxicity triggering receptor 3 (201 aa).

Residues 1–18 (MAWMLLLILIMVHPGSCA) form the signal peptide. The Ig-like domain occupies 19–126 (LWVSQPPEIR…VGTGNGTRLV (108 aa)). The Extracellular portion of the chain corresponds to 19–135 (LWVSQPPEIR…VVEKEHPQLG (117 aa)). A disulfide bond links C39 and C108. Residues N42 and N121 are each glycosylated (N-linked (GlcNAc...) asparagine). A helical membrane pass occupies residues 136–156 (AGTVLLLRAGFYAVSFLSVAV). The Cytoplasmic segment spans residues 157–201 (GSTVYYQGKCLTWKGPRRQLPAVVPAPLPPPCGSSAHLLPPVPGG).

Belongs to the natural cytotoxicity receptor (NCR) family. In terms of assembly, homodimer in the unliganted form. Interacts with CD3Z. Interacts with and is activated by binding to NCR3LG1. Interacts with and is activated by binding to BAG6. Interacts with and is inhibited by binding to LGALS3. In terms of tissue distribution, selectively expressed by all resting and activated NK cells and weakly expressed in spleen.

Its subcellular location is the cell membrane. Cell membrane receptor of natural killer/NK cells that is activated by binding of extracellular ligands including BAG6 and NCR3LG1. Stimulates NK cells cytotoxicity toward neighboring cells producing these ligands. It controls, for instance, NK cells cytotoxicity against tumor cells. Engagement of NCR3 by BAG6 also promotes myeloid dendritic cells (DC) maturation, both through killing DCs that did not acquire a mature phenotype, and inducing the release by NK cells of TNFA and IFNG which promote DC maturation. This Homo sapiens (Human) protein is Natural cytotoxicity triggering receptor 3.